The chain runs to 320 residues: ATP-dependent 6-phosphofructokinase (320 aa).

Residues Gly-11, 72 to 73 (RY), and 102 to 105 (GDGS) each bind ATP. A Mg(2+)-binding site is contributed by Asp-103. Residues 125 to 127 (TID), Arg-162, 169 to 171 (MGR), Glu-222, Arg-243, and 249 to 252 (HMQR) each bind substrate. Asp-127 (proton acceptor) is an active-site residue.

Belongs to the phosphofructokinase type A (PFKA) family. ATP-dependent PFK group I subfamily. Prokaryotic clade 'B1' sub-subfamily. Homotetramer. Mg(2+) serves as cofactor.

The protein resides in the cytoplasm. It carries out the reaction beta-D-fructose 6-phosphate + ATP = beta-D-fructose 1,6-bisphosphate + ADP + H(+). It participates in carbohydrate degradation; glycolysis; D-glyceraldehyde 3-phosphate and glycerone phosphate from D-glucose: step 3/4. With respect to regulation, allosterically activated by ADP and other diphosphonucleosides, and allosterically inhibited by phosphoenolpyruvate. Functionally, catalyzes the phosphorylation of D-fructose 6-phosphate to fructose 1,6-bisphosphate by ATP, the first committing step of glycolysis. The protein is ATP-dependent 6-phosphofructokinase of Lactiplantibacillus plantarum (strain ATCC BAA-793 / NCIMB 8826 / WCFS1) (Lactobacillus plantarum).